The following is a 439-amino-acid chain: CBL-interacting protein kinase 14 (439 aa).

The region spanning 12–267 (YELGRLLGKG…IQKIKESTWF (256 aa)) is the Protein kinase domain. ATP contacts are provided by residues 18–26 (LGKGTFGKV) and Lys-41. Residue Asp-135 is the Proton acceptor of the active site. Positions 153–182 (DFGLSALSESKRQDGLLHTTCGTPAYVAPE) are activation loop. The NAF domain occupies 298–333 (RKKNAHEDVKPMSVTNLNAFEIISFSKGFDLSGMFI). Residues 338–367 (RNEARFTSDKSASTIISKLEDVAKALNLRV) are PPI.

It belongs to the protein kinase superfamily. CAMK Ser/Thr protein kinase family. SNF1 subfamily. Requires Mn(2+) as cofactor.

The catalysed reaction is L-seryl-[protein] + ATP = O-phospho-L-seryl-[protein] + ADP + H(+). It carries out the reaction L-threonyl-[protein] + ATP = O-phospho-L-threonyl-[protein] + ADP + H(+). In terms of biological role, CIPK serine-threonine protein kinases interact with CBL proteins. Binding of a CBL protein to the regulatory NAF domain of CIPK protein lead to the activation of the kinase in a calcium-dependent manner. The chain is CBL-interacting protein kinase 14 (CIPK14) from Oryza sativa subsp. japonica (Rice).